Reading from the N-terminus, the 173-residue chain is Gonadotropin inhibitory hormone peptides (173 aa).

Residues 1 to 26 (MEIISTQKFILLTLATVAFLTPHGAC) form the signal peptide. Residues 27–82 (LDELMKSSLESREDDDDKYYETKDSILEEKQRSLNFEEMKDWGSKNFMKVNTPTVN) constitute a propeptide that is removed on maturation. Phe-95 carries the phenylalanine amide modification. Residues 98-103 (SNPEER) constitute a propeptide that is removed on maturation. Phe-115 carries the phenylalanine amide modification. The propeptide occupies 118 to 140 (AFGESLSRRAPNLSNRSGRSPLA). Phe-154 carries the phenylalanine amide modification. The propeptide occupies 157–173 (SVPISLSQGVQESEPGM).

The protein belongs to the FARP (FMRFamide related peptide) family. In terms of tissue distribution, specifically expressed in the diencephalon.

It localises to the secreted. Hypothalamic factor, responsible for the negative regulation of gonadotropin secretion. The sequence is that of Gonadotropin inhibitory hormone peptides (GNIH) from Coturnix japonica (Japanese quail).